We begin with the raw amino-acid sequence, 318 residues long: NADH-ubiquinone oxidoreductase chain 1 (318 aa).

8 helical membrane passes run 3–23 (LINL…LTLL), 69–89 (MLFI…WTPL), 102–122 (MLFI…SGWA), 144–164 (VTLA…TLLS), 171–191 (YIWL…STLA), 222–242 (LFFL…IILF), 253–273 (ELYT…FLWI), and 294–314 (LPLT…LAGI).

The protein belongs to the complex I subunit 1 family. In terms of assembly, core subunit of respiratory chain NADH dehydrogenase (Complex I) which is composed of 45 different subunits.

The protein localises to the mitochondrion inner membrane. The enzyme catalyses a ubiquinone + NADH + 5 H(+)(in) = a ubiquinol + NAD(+) + 4 H(+)(out). Its function is as follows. Core subunit of the mitochondrial membrane respiratory chain NADH dehydrogenase (Complex I) which catalyzes electron transfer from NADH through the respiratory chain, using ubiquinone as an electron acceptor. Essential for the catalytic activity and assembly of complex I. The chain is NADH-ubiquinone oxidoreductase chain 1 (MT-ND1) from Murina florium (Flores tube-nosed bat).